The following is a 530-amino-acid chain: MPGKWISALLLLQISCCFQSGNCGKVLVWPMEFSHWMNIKTILDELVQRGHEVTVLKPSAYYVLDPKKSPDLKFETFPTSVSKDELENYFIKLVDVWTYELQRDTCLSYSPLLQNMIDGFSDYYLSLCKDTVSNKQLMAKLQESKFDVLLSDPVAACGELIAEVLHIPFLYSLRFSPGYKIEKSSGRFILPPSYVPVILSGMGGPMTFIDRVKNMICTLYFDFWFHMFNAKKWDPFYSEILGRPTTLAETMGKAEMWLIRSYWDLEFPHPTLPNVDYIGGLQCRPPKPLPKDMEDFVQSSGEHGVVVFSLGSMVSSMTEEKANAIAWALAQIPQKVLWKFDGKTPATLGPNTRVYKWLPQNDLLGHPKTKAFVTHSGANGVYEAIYHGIPMVGIPMFGEQHDNIAHMVAKGAAVTLNIRTMSKSDLFNALKEIINNPFYKKNAVWLSTIHHDQPMKPLDKAVFWIEFVMRHKGAKHLRPLGHDLPWYQYHSLDVIGFLLTCSAVIAVLTVKCFLFIYRLFVKKEKKMKNE.

The N-terminal stretch at 1–23 is a signal peptide; that stretch reads MPGKWISALLLLQISCCFQSGNC. Residues 494–510 traverse the membrane as a helical segment; the sequence is VIGFLLTCSAVIAVLTV.

This sequence belongs to the UDP-glycosyltransferase family.

It localises to the endoplasmic reticulum membrane. It carries out the reaction glucuronate acceptor + UDP-alpha-D-glucuronate = acceptor beta-D-glucuronoside + UDP + H(+). The enzyme catalyses 17alpha-estradiol + UDP-alpha-D-glucuronate = 17alpha-estradiol 3-O-(beta-D-glucuronate) + UDP + H(+). The catalysed reaction is 17alpha-estradiol + UDP-alpha-D-glucuronate = 17alpha-estradiol 17-O-(beta-D-glucuronate) + UDP + H(+). It catalyses the reaction 17beta-estradiol + UDP-alpha-D-glucuronate = 17beta-estradiol 17-O-(beta-D-glucuronate) + UDP + H(+). It carries out the reaction 17beta-hydroxy-5alpha-androstan-3-one + UDP-alpha-D-glucuronate = 5alpha-dihydrotestosterone 17-O-(beta-D-glucuronate) + UDP + H(+). The enzyme catalyses testosterone + UDP-alpha-D-glucuronate = testosterone 17-O-(beta-D-glucuronate) + UDP + H(+). Its function is as follows. UDP-glucuronosyltransferase (UGT) that catalyzes phase II biotransformation reactions in which lipophilic substrates are conjugated with glucuronic acid to increase the metabolite's water solubility, thereby facilitating excretion into either the urine or bile. Catalyzes the glucuronidation of endogenous steroid hormones such as androgens (epitestosterone, androsterone) and estrogens (estradiol, epiestradiol). The chain is UDP-glucuronosyltransferase 2B17 from Rattus norvegicus (Rat).